The following is a 491-amino-acid chain: D-xylose-proton symporter (491 aa).

Over 1-9 (MNTQYNSSY) the chain is Cytoplasmic. Residues 10–30 (IFSITLVATLGGLLFGYDTAV) form a helical membrane-spanning segment. Topologically, residues 31–55 (ISGTVESLNTVFVAPQNLSESAANS) are periplasmic. The helical transmembrane segment at 56-76 (LLGFCVASALIGCIIGGALGG) threads the bilayer. Topologically, residues 77-89 (YCSNRFGRRDSLK) are cytoplasmic. A helical transmembrane segment spans residues 90–110 (IAAVLFFISGVGSAWPELGFT). At 111–133 (SINPDNTVPVYLAGYVPEFVIYR) the chain is on the periplasmic side. A helical membrane pass occupies residues 134–154 (IIGGIGVGLASMLSPMYIAEL). Residues 155–165 (APAHIRGKLVS) lie on the Cytoplasmic side of the membrane. A helical membrane pass occupies residues 166-186 (FNQFAIIFGQLLVYCVNYFIA). Q168 is a beta-D-xylose binding site. Topologically, residues 187–200 (RSGDASWLNTDGWR) are periplasmic. A helical membrane pass occupies residues 201 to 221 (YMFASECIPALLFLMLLYTVP). At 222–272 (ESPRWLMSRGKQEQAEGILRKIMGNTLATQAVQEIKHSLDHGRKTGGRLLM) the chain is on the cytoplasmic side. Residues 273 to 293 (FGVGVIVIGVMLSIFQQFVGI) form a helical membrane-spanning segment. Beta-D-xylose contacts are provided by residues 288-289 (QQ) and N294. Residues 294–312 (NVVLYYAPEVFKTLGASTD) are Periplasmic-facing. The chain crosses the membrane as a helical span at residues 313 to 333 (IALLQTIIVGVINLTFTVLAI). At 334-343 (MTVDKFGRKP) the chain is on the cytoplasmic side. A helical transmembrane segment spans residues 344-364 (LQIIGALGMAIGMFSLGTAFY). The Periplasmic portion of the chain corresponds to 365 to 369 (TQAPG). Residues 370 to 390 (IVALLSMLFYVAAFAMSWGPV) form a helical membrane-spanning segment. The Cytoplasmic portion of the chain corresponds to 391-407 (CWVLLSEIFPNAIRGKA). 2 residues coordinate beta-D-xylose: W392 and Q415. Residues 408–428 (LAIAVAAQWLANYFVSWTFPM) form a helical membrane-spanning segment. The Periplasmic segment spans residues 429–442 (MDKNSWLVAHFHNG). A helical membrane pass occupies residues 443 to 463 (FSYWIYGCMGVLAALFMWKFV). The Cytoplasmic segment spans residues 464–491 (PETKGKTLEELEALWEPETKKTQQTATL).

Belongs to the major facilitator superfamily. Sugar transporter (TC 2.A.1.1) family.

Its subcellular location is the cell inner membrane. The enzyme catalyses D-xylose(in) + H(+)(in) = D-xylose(out) + H(+)(out). Its function is as follows. Uptake of D-xylose across the boundary membrane with the concomitant transport of protons into the cell (symport system). This is D-xylose-proton symporter (xylE) from Escherichia coli O157:H7.